The sequence spans 2194 residues: Glutamate synthase [NADH], amyloplastic (2194 aa).

The N-terminal 101 residues, 1–101 (MSNSLSLTFT…LYDPAFDKDS (101 aa)), are a transit peptide targeting the amyloplast. The Nucleophile role is filled by cysteine 102. Residues 102 to 503 (CGVGFVAELN…PGMMLLVDFE (402 aa)) form the Glutamine amidotransferase type-2 domain. Residues 1021 to 1045 (GGKSNTGEGGEQPSRMEPLADGSRN) are disordered. 1193–1250 (LAETHQTLVANDLRGRTTLQTDGQLKTGRDVAIAALLGAEEYGFSTAPLITLGCIMMR) serves as a coordination point for FMN. Positions 1246, 1252, and 1257 each coordinate [3Fe-4S] cluster. Residue 1974–1988 (GGGDTGTDCIGTSIR) coordinates NAD(+).

This sequence belongs to the glutamate synthase family. As to quaternary structure, monomer. It depends on [3Fe-4S] cluster as a cofactor. FAD is required as a cofactor. FMN serves as cofactor. Expressed in infected cells in root nodules. Barely detected in roots and stems.

Its subcellular location is the plastid. The protein resides in the amyloplast. It carries out the reaction 2 L-glutamate + NAD(+) = L-glutamine + 2-oxoglutarate + NADH + H(+). Its pathway is amino-acid biosynthesis; L-glutamate biosynthesis via GLT pathway; L-glutamate from 2-oxoglutarate and L-glutamine (NAD(+) route): step 1/1. It functions in the pathway energy metabolism; nitrogen metabolism. Inhibited by malate, citrate, glutamate, NAD(+) and azaserine, but not by 2-2' dipyridil and N-ethylmaleimide. Its function is as follows. Required for the assimilation of symbiotically fixed nitrogen into amino acids in root nodules. In Medicago sativa (Alfalfa), this protein is Glutamate synthase [NADH], amyloplastic.